A 161-amino-acid chain; its full sequence is Transcription elongation factor GreA (161 aa).

The stretch at 8-28 (LTQEGFKQLEKELENLIQVKR) forms a coiled coil.

This sequence belongs to the GreA/GreB family.

Its function is as follows. Necessary for efficient RNA polymerase transcription elongation past template-encoded arresting sites. The arresting sites in DNA have the property of trapping a certain fraction of elongating RNA polymerases that pass through, resulting in locked ternary complexes. Cleavage of the nascent transcript by cleavage factors such as GreA or GreB allows the resumption of elongation from the new 3'terminus. GreA releases sequences of 2 to 3 nucleotides. In Mycoplasma genitalium (strain ATCC 33530 / DSM 19775 / NCTC 10195 / G37) (Mycoplasmoides genitalium), this protein is Transcription elongation factor GreA.